The chain runs to 661 residues: Immunoglobulin-like domain-containing receptor 2 (661 aa).

An N-terminal signal peptide occupies residues 1-35 (MPAFPTLDLDGKLGKMDRVVLGWTAVFWLTAMVEG). The region spanning 36 to 177 (LQVTVPDKKK…LEGKNEDSVE (142 aa)) is the Ig-like V-type domain. Residues 36–201 (LQVTVPDKKK…PSFAVEIMPE (166 aa)) are Lumenal-facing. C57 and C160 are oxidised to a cystine. A helical membrane pass occupies residues 202–222 (WVFVGLVILGIFLFFVLVGIC). Topologically, residues 223-661 (WCQCCPHSCC…DFPTRMSLVV (439 aa)) are cytoplasmic. Disordered regions lie at residues 288-310 (LMDKPHPPPLAPSDSTGGSHSVR), 410-429 (EDRESFRHSQQRSKSEMLSR), and 453-661 (QRSR…SLVV). 2 stretches are compositionally biased toward basic and acidic residues: residues 410 to 428 (EDRESFRHSQQRSKSEMLS) and 463 to 478 (HEARAGSRFERSESRA). The residue at position 487 (S487) is a Phosphoserine. Residues 491-506 (YYGRGRSREPPGDGER) show a composition bias toward basic and acidic residues. Omega-N-methylarginine is present on R559. S594 is subject to Phosphoserine. A compositionally biased stretch (acidic residues) spans 595-607 (EGEDEDDAADEDA). The span at 628–639 (RGRDLSFHSNSE) shows a compositional bias: basic and acidic residues.

Belongs to the immunoglobulin superfamily. LISCH7 family. Interacts with MARVELD2 and OCLN. Interacts with P4HB and HSPA5; the interaction with HSPA5 stabilizes ILDR2 expression. Interacts (via C-terminus) with TRA2A, TRA2B and SRSF1. As to expression, expressed in epithelial tissues, mainly in liver, kidney and colon.

The protein localises to the endoplasmic reticulum membrane. Its subcellular location is the cell junction. It is found in the tight junction. The protein resides in the nucleus. May be involved in ER stress pathways with effects on lipid homeostasis and insulin secretion. With ILDR1 and LSR, involved in the maintain of the epithelial barrier function through the recruitment of MARVELD2/tricellulin to tricellular tight junctions. Also functions as a B7-like protein family member expressed on immune cells and inflamed tissue and with T-cell inhibitory activity. In the inner ear, may regulate alternative pre-mRNA splicing via binding to TRA2A, TRA2B and SRSF1. The chain is Immunoglobulin-like domain-containing receptor 2 from Mus musculus (Mouse).